Consider the following 287-residue polypeptide: Pantothenate synthetase (287 aa).

30–37 (MGNLHSGH) contributes to the ATP binding site. Residue His-37 is the Proton donor of the active site. Gln-61 is a binding site for (R)-pantoate. Gln-61 contributes to the beta-alanine binding site. Residue 149 to 152 (GEKD) participates in ATP binding. Residue Gln-155 coordinates (R)-pantoate. Residues Val-178 and 186–189 (LSSR) each bind ATP.

It belongs to the pantothenate synthetase family. As to quaternary structure, homodimer.

The protein resides in the cytoplasm. It catalyses the reaction (R)-pantoate + beta-alanine + ATP = (R)-pantothenate + AMP + diphosphate + H(+). The protein operates within cofactor biosynthesis; (R)-pantothenate biosynthesis; (R)-pantothenate from (R)-pantoate and beta-alanine: step 1/1. Functionally, catalyzes the condensation of pantoate with beta-alanine in an ATP-dependent reaction via a pantoyl-adenylate intermediate. The polypeptide is Pantothenate synthetase (Pseudomonas entomophila (strain L48)).